Reading from the N-terminus, the 321-residue chain is Peroxidase 27 (321 aa).

The signal sequence occupies residues 1–23 (MAASKRLVVSCLFLVLLFAQANS). 4 cysteine pairs are disulfide-bonded: C35-C113, C68-C73, C119-C317, and C196-C228. The Proton acceptor role is filled by H66. Residues D67, V70, G72, D74, and S76 each contribute to the Ca(2+) site. P159 contacts substrate. N-linked (GlcNAc...) asparagine glycosylation is present at N164. Residue H189 coordinates heme b. Ca(2+) is bound at residue T190. N-linked (GlcNAc...) asparagine glycosylation occurs at N205. Residues D240, S243, and D248 each contribute to the Ca(2+) site.

It belongs to the peroxidase family. Classical plant (class III) peroxidase subfamily. Requires heme b as cofactor. The cofactor is Ca(2+). Expressed in the whole plant, but preferentially in roots and flowers.

It is found in the secreted. The catalysed reaction is 2 a phenolic donor + H2O2 = 2 a phenolic radical donor + 2 H2O. In terms of biological role, removal of H(2)O(2), oxidation of toxic reductants, biosynthesis and degradation of lignin, suberization, auxin catabolism, response to environmental stresses such as wounding, pathogen attack and oxidative stress. These functions might be dependent on each isozyme/isoform in each plant tissue. This chain is Peroxidase 27 (PER27), found in Arabidopsis thaliana (Mouse-ear cress).